The sequence spans 410 residues: Transcription factor SPN1 (410 aa).

The tract at residues 1–132 (MSTADQEQPK…SRQELEEKLD (132 aa)) is disordered. Threonine 15 carries the post-translational modification Phosphothreonine. A compositionally biased stretch (polar residues) spans 20–52 (TASSQKSTINAENENTKQNQSMEPQETSKGTSN). Serine 23 carries the phosphoserine; by ATM or ATR modification. Serine 40 bears the Phosphoserine mark. Over residues 53–65 (DTKDPDNGEKNEE) the composition is skewed to basic and acidic residues. At serine 85 the chain carries Phosphoserine. Phosphothreonine is present on threonine 86. Serine 89 is modified (phosphoserine). Positions 219–296 (QSVRIWLEPL…AEWTRPIIGA (78 aa)) constitute a TFIIS N-terminal domain. The segment at 318-346 (KSVMDSAKNRKKKSKSGEDPTSRGSSVQT) is disordered.

The protein belongs to the IWS1 family. Interacts with ABD1, RBP1, SPT5 and SPT6.

The protein localises to the nucleus. Transcription factor involved in RNA polymerase II transcription regulation. May function in both SPT15/TBP post-recruitment and recruitment steps of transcription. In Saccharomyces cerevisiae (strain ATCC 204508 / S288c) (Baker's yeast), this protein is Transcription factor SPN1 (SPN1).